The chain runs to 1033 residues: Putative U-box domain-containing protein 42 (1033 aa).

The tract at residues 145-226 (SQSQMTDIPD…SSNASSQRKY (82 aa)) is disordered. Residues 200–226 (LSKSQSQSTEIPDIPSQSSNASSQRKY) show a composition bias toward polar residues. The U-box domain occupies 245-322 (PPYQAFICPL…QEWKVRNEAA (78 aa)). 5 ARM repeats span residues 483 to 522 (PENI…EIDI), 523 to 562 (GHEK…HISL), 564 to 608 (HPNN…NILE), 610 to 659 (GLEH…SLSK), and 665 to 704 (ATIV…ALTP).

The enzyme catalyses S-ubiquitinyl-[E2 ubiquitin-conjugating enzyme]-L-cysteine + [acceptor protein]-L-lysine = [E2 ubiquitin-conjugating enzyme]-L-cysteine + N(6)-ubiquitinyl-[acceptor protein]-L-lysine.. The protein operates within protein modification; protein ubiquitination. Functionally, functions as an E3 ubiquitin ligase. This Arabidopsis thaliana (Mouse-ear cress) protein is Putative U-box domain-containing protein 42 (PUB42).